The following is a 616-amino-acid chain: FAD-linked oxidoreductase cheF (616 aa).

An FAD-binding PCMH-type domain is found at 160–344 (NQGLVSPWYV…LSMTVRVEPA (185 aa)).

This sequence belongs to the oxygen-dependent FAD-linked oxidoreductase family. The cofactor is FAD.

The protein operates within secondary metabolite biosynthesis. FAD-linked oxidoreductase; part of the gene cluster that mediates the biosynthesis of chaetoglobosin A which has a unique inhibitory activity against actin polymerization in mammalian cells. Chaetoglobosin A and its intermediates are involved in the morphological differentiation of C.globosum. The first step of the pathway is the synthesis of prochaetoglobosin I via condensation of one acetyl-CoA, 8 malonyl-CoA, and a L-tryptophan molecule by the PKS-NRPS hybrid synthetase cheA, followed by reduction of backbone double bond to install desired geometry by the enoyl reductase cheB. Further multiple oxidation steps performed by the cytochrome P450 monooxygenases cheE and cheG, as well as by the FAD-linked oxidoreductase cheF, lead to the formation of chaetoglobosin A. Depending on the order of action of these reductases, distinct intermediates can be identified. Within the pathway, the cytochrome P450 monooxygenase cheE catalyzes a stereospecific epoxidation on prochaetoglobosin I, cytoglobosin D, and chaetoglobosin J intermediates. The FAD-linked oxidoreductase cheF performs dehydrogenation of the C-20 hydroxyl groups in the 20-dihyrochaetoglobosin A and cytoglobosin D intermediates. Finally, the cytochrome P450 monooxygenase cheG can catalyze the stereospecific dihydroxylation of prochaetoglobosin I and prochaetoglobosin IV at C-19 and C-20, respectively. The Diels-Alderase cheD may play a role in the post-PKS-NRPS biosynthetic steps catalyzing Diels-Alder cyclization. This chain is FAD-linked oxidoreductase cheF, found in Chaetomium globosum (strain ATCC 6205 / CBS 148.51 / DSM 1962 / NBRC 6347 / NRRL 1970) (Soil fungus).